The primary structure comprises 293 residues: MAGSLSEIKDKILSTEKTSKITSAMQMVSSAKLVKSEQAARDFQVYASKIRQITTNLLKSDLVSGSDNPMLSSRPVKKTGYIVITSDKGLVGGYNSKILKAMMDTITDYHTENDDYAIISIGSVGSDFFKARGMNVSFELRGLEDQPSFDQVGKIIAQAVEMYKNELFDELYVCYNHHVNSLTSQVRMQQMLPIKELDAEEASEDRVITGFELEPNREVILEQLLPQYTESLIYGAIIDAKTAEHAAGMTAMQTATDNAKNVINDLTIQYNRARQAAITQEITEIVAGANALE.

The protein belongs to the ATPase gamma chain family. As to quaternary structure, F-type ATPases have 2 components, CF(1) - the catalytic core - and CF(0) - the membrane proton channel. CF(1) has five subunits: alpha(3), beta(3), gamma(1), delta(1), epsilon(1). CF(0) has three main subunits: a, b and c.

It is found in the cell membrane. Its function is as follows. Produces ATP from ADP in the presence of a proton gradient across the membrane. The gamma chain is believed to be important in regulating ATPase activity and the flow of protons through the CF(0) complex. The protein is ATP synthase gamma chain of Streptococcus agalactiae serotype Ia (strain ATCC 27591 / A909 / CDC SS700).